Reading from the N-terminus, the 777-residue chain is MEEKYSSNVMSSGRLGPVDAPESRLTRYIVLLCFTKFLKALGIFESYDLLKVVHIVQFIFILKLGSTCFMVLFQKPFSSGKSITKRQWVSIVKHAFVSCIISLLWFFGLTLCGPLRTLLLFEHSDIVVISLLTVLFTGSGGGPSKTRGAAFFIIAVICLLLFDNDDLMAKIAEHPEGHHDSALTHFLYRAFFLLGVADHKGGVLLLVLALCFNVGFHTASRKLSLDIGGAKRLQALSHLVSVIILSPWVIILSATTESKIESWSALIMPFMTVIFSVMIMDFYVESVCSVKMEPSKCARYGSFLIFASALLLGNFWTHPITDQLRAMNKPAHQLHTEHVLSGGVVVSAIFFILSAQILASSSRKGQRGTLVGYSPEGTPLYNFMGDALHNTSPSMPRFLKDSLKQILEEYDSRQIFYFLCLNLAFTFVEIFYGVWTNSLGLLSDGFHMLFDCSALVMGLIAALMTRWKATRIFSYGYGRVEILSGFINGLFLVVIAFFVFIEAVARIYDPPDINTDMLTPVSVGGLIVNLVGICAFSHAHSHGAARGGCPSHDHGHSHHGHGHSHGHNHGHSHSDHGHNHGHTHNHGHSHGSAGVGMNANMRGVFSHVLADTLGSVGVIVSTILIRQFGWLIADPLCSLFIAVLIFGSVLPLLKDACQVILLRIPQETEKGINIALEKISNLDGLISYRDPHFWRHSASLVAGTIHVQVMSDVVEQRIIQQVTSLLKDAGVNNLTVQVEKEAYFQHMSGLSTGFQDVLIMTKQMDTIKYYKDGTYIM.

Residues 1-28 (MEEKYSSNVMSSGRLGPVDAPESRLTRY) lie on the Cytoplasmic side of the membrane. A helical transmembrane segment spans residues 29–49 (IVLLCFTKFLKALGIFESYDL). The Lumenal portion of the chain corresponds to 50 to 52 (LKV). Residues 53–73 (VHIVQFIFILKLGSTCFMVLF) traverse the membrane as a helical segment. The Cytoplasmic portion of the chain corresponds to 74-94 (QKPFSSGKSITKRQWVSIVKH). The helical transmembrane segment at 95-115 (AFVSCIISLLWFFGLTLCGPL) threads the bilayer. Over 116-117 (RT) the chain is Lumenal. A helical transmembrane segment spans residues 118–138 (LLLFEHSDIVVISLLTVLFTG). Over 139–148 (SGGGPSKTRG) the chain is Cytoplasmic. Residues 149-169 (AAFFIIAVICLLLFDNDDLMA) traverse the membrane as a helical segment. Residues 170–189 (KIAEHPEGHHDSALTHFLYR) are Lumenal-facing. Residues 190 to 210 (AFFLLGVADHKGGVLLLVLAL) traverse the membrane as a helical segment. Topologically, residues 211–234 (CFNVGFHTASRKLSLDIGGAKRLQ) are cytoplasmic. A helical transmembrane segment spans residues 235–255 (ALSHLVSVIILSPWVIILSAT). Residues 256 to 263 (TESKIESW) lie on the Lumenal side of the membrane. A helical transmembrane segment spans residues 264–284 (SALIMPFMTVIFSVMIMDFYV). Residues 285-299 (ESVCSVKMEPSKCAR) lie on the Cytoplasmic side of the membrane. Residues 300–320 (YGSFLIFASALLLGNFWTHPI) traverse the membrane as a helical segment. Residues 321–338 (TDQLRAMNKPAHQLHTEH) lie on the Lumenal side of the membrane. The helical transmembrane segment at 339-359 (VLSGGVVVSAIFFILSAQILA) threads the bilayer. At 360-414 (SSSRKGQRGTLVGYSPEGTPLYNFMGDALHNTSPSMPRFLKDSLKQILEEYDSRQ) the chain is on the cytoplasmic side. A helical membrane pass occupies residues 415-435 (IFYFLCLNLAFTFVEIFYGVW). The Lumenal portion of the chain corresponds to 436–444 (TNSLGLLSD). A helical membrane pass occupies residues 445-465 (GFHMLFDCSALVMGLIAALMT). Residues His447 and Asp451 each coordinate Zn(2+). At 466–484 (RWKATRIFSYGYGRVEILS) the chain is on the cytoplasmic side. The helical transmembrane segment at 485–505 (GFINGLFLVVIAFFVFIEAVA) threads the bilayer. Residues 506 to 516 (RIYDPPDINTD) lie on the Lumenal side of the membrane. Residues 517 to 537 (MLTPVSVGGLIVNLVGICAFS) form a helical membrane-spanning segment. The tract at residues 538-586 (HAHSHGAARGGCPSHDHGHSHHGHGHSHGHNHGHSHSDHGHNHGHTHNH) is his-rich loop; required for zinc transport. The Cytoplasmic segment spans residues 538–604 (HAHSHGAARG…VGMNANMRGV (67 aa)). A disordered region spans residues 547-593 (GGCPSHDHGHSHHGHGHSHGHNHGHSHSDHGHNHGHTHNHGHSHGSA). Basic residues-rich tracts occupy residues 555 to 571 (GHSH…NHGH) and 579 to 589 (NHGHTHNHGHS). A helical transmembrane segment spans residues 605–625 (FSHVLADTLGSVGVIVSTILI). Zn(2+)-binding residues include His607 and Asp611. Topologically, residues 626-629 (RQFG) are lumenal. A helical membrane pass occupies residues 630 to 650 (WLIADPLCSLFIAVLIFGSVL). Residues 651 to 777 (PLLKDACQVI…KYYKDGTYIM (127 aa)) are Cytoplasmic-facing.

It belongs to the cation diffusion facilitator (CDF) transporter (TC 2.A.4) family. SLC30A subfamily. Heterodimer with SLC30A6/ZNT6; form a functional zinc ion transmembrane transporter.

It localises to the golgi apparatus. It is found in the golgi stack membrane. The protein localises to the cytoplasmic vesicle. Its subcellular location is the COPII-coated vesicle membrane. The protein resides in the secretory vesicle membrane. It localises to the trans-Golgi network membrane. The enzyme catalyses Zn(2+)(in) + 2 H(+)(out) = Zn(2+)(out) + 2 H(+)(in). Together with SLC30A6 forms a functional proton-coupled zinc ion antiporter mediating zinc entry into the lumen of organelles along the secretory pathway. By contributing to zinc ion homeostasis within the early secretory pathway, regulates the activation and folding of enzymes like alkaline phosphatases and enzymes involved in phosphatidylinositol glycan anchor biosynthesis. The protein is Proton-coupled zinc antiporter SLC30A5 (slc30a5) of Xenopus tropicalis (Western clawed frog).